Here is a 475-residue protein sequence, read N- to C-terminus: Neuronal acetylcholine receptor subunit alpha-5 (475 aa).

The first 29 residues, 1–29, serve as a signal peptide directing secretion; the sequence is MAAPGWGRWVLGLGPLLLQVFLPFQLVAG. The Extracellular segment spans residues 30–261; the sequence is RWGPEGAGGG…VIKRLPLFYT (232 aa). A disulfide bridge links Cys177 with Cys191. N-linked (GlcNAc...) asparagine glycans are attached at residues Asn190 and Asn236. A disulfide bridge connects residues Cys241 and Cys242. The next 3 helical transmembrane spans lie at 262–282, 289–309, and 324–344; these read LFLIIPCIGLSFLTVLVFYLP, ICLCTSVLVSLTVFLLVIEEI, and LVFTMIFVTLSIMVTVFAINI. Residues 345–437 are Cytoplasmic-facing; that stretch reads HHRSSSTHDA…KFIAQVLDRM (93 aa). A helical transmembrane segment spans residues 438-458; that stretch reads FLWTFLLVSVVGSLGLFVPVI. The Extracellular portion of the chain corresponds to 459–475; the sequence is YKWANIIVPIHIGNENK.

It belongs to the ligand-gated ion channel (TC 1.A.9) family. Acetylcholine receptor (TC 1.A.9.1) subfamily. Alpha-5/CHRNA5 sub-subfamily. Neuronal AChR that forms heteropentamers composed of two different type of subunits: alpha and non-alpha (beta). CHRNA5/alpha-5 subunit is only able to form functional nAChRs when co-assembled with another alpha subunit, can be combined to CHRNA4/alpha-4 or CHRNA3/alpha-3 and CHRNB4/beta-4 or CHRNB2/beta-2 to give rise to functional receptors. Interacts with LYPD6.

It localises to the synaptic cell membrane. The protein resides in the cell membrane. It catalyses the reaction Ca(2+)(in) = Ca(2+)(out). The enzyme catalyses K(+)(in) = K(+)(out). The catalysed reaction is Na(+)(in) = Na(+)(out). Activated by a myriad of ligands such as acetylcholine, cytisine, nicotine, choline and epibatidine. Functionally, component of neuronal acetylcholine receptors (nAChRs) that function as pentameric, ligand-gated cation channels with high calcium permeability among other activities. nAChRs are excitatory neurotrasnmitter receptors formed by a collection of nAChR subunits known to mediate synaptic transmission in the nervous system and the neuromuscular junction. Each nAchR subunit confers differential attributes to channel properties, including activation, deactivation and desensitization kinetics, pH sensitivity, cation permeability, and binding to allosteric modulators. Has an accessory rather than functional role and is only able to form functional nAChRs when co-assembled with another beta subunit. Participates in pentameric assemblies along with CHRNA3, CHRNA4, CHRNB2 and CHRNB4. Increases receptor sensitivity to acetylcholine and nicotine when associated with CHRNA4 and CHRNB2. Plays a role in nicotine addiction. The chain is Neuronal acetylcholine receptor subunit alpha-5 (CHRNA5) from Bos taurus (Bovine).